A 416-amino-acid polypeptide reads, in one-letter code: Protein LAZY 1 (416 aa).

A helical transmembrane segment spans residues 63–83 (FTFGGSGLLTIGTLGIAAVAI). The short motif at 69 to 75 (GLLTIGT) is the IGT motif element. 2 disordered regions span residues 266–306 (AAAA…GMPA) and 337–361 (KKSR…DGPL). Positions 270–282 (GVGGDRAGKGGGY) are enriched in gly residues. A Nuclear localization signal motif is present at residues 278–295 (KGGGYKTMKKRKVKDEKG).

It belongs to the LAZY family. As to expression, expressed specifically in the cells at the inner side of the vascular bundles of young leaf sheaths and peripheral cylinders of vascular bundles in the unelongated stems. Expressed in the leaf sheath pulvinus and the lamina joint.

It is found in the cell membrane. It localises to the nucleus. In terms of biological role, involved in the regulation of shoot gravitropism and tiller angle through negative regulation of basipetal polar auxin transport (PAT). Acts as positive regulator of lateral auxin transport. Promotes vertical shoot growth. LAZY1 and TAC1 play opposite functions in the regulation of tiller growth angle. This is Protein LAZY 1 from Oryza sativa subsp. japonica (Rice).